The chain runs to 406 residues: uncharacterized protein (406 aa).

The protein resides in the plastid. It localises to the chloroplast. This is an uncharacterized protein from Euglena gracilis.